Here is a 473-residue protein sequence, read N- to C-terminus: H(+)/Cl(-) exchange transporter ClcA (473 aa).

Topologically, residues 1–32 (MKTDTSTFLAQQIVRLRRRDQIRRLMQRDKTP) are cytoplasmic. Residues 33–69 (LAILFMAAVVGTLTGLVGVAFEKAVSWVQNMRIGALV) traverse the membrane as a helical segment. Residues 70–76 (QVADHAF) lie on the Periplasmic side of the membrane. A helical transmembrane segment spans residues 77–100 (LLWPLAFILSALLAMVGYFLVRKF). The Selectivity filter part_1 motif lies at 106 to 110 (GSGIP). Position 107 (S107) interacts with chloride. An intramembrane region (helical) is located at residues 109–116 (IPEIEGAL). Over 117-123 (EELRPVR) the chain is Cytoplasmic. 2 helical membrane passes run 124 to 141 (WWRV…TLGA) and 148 to 166 (EGPT…LDVF). The short motif at 146–150 (GREGP) is the Selectivity filter part_2 element. Over 167 to 176 (RMRSAEARHT) the chain is Cytoplasmic. Intramembrane regions (helical) lie at residues 177 to 189 (LLAT…LSAA) and 193 to 201 (PLAGILFII). Residues 202–214 (EEMRPQFRYNLIS) lie on the Cytoplasmic side of the membrane. Residues 215–232 (IKAVFTGVIMSSIVFRIF) form a helical membrane-spanning segment. Residues 233–252 (NGEAPIIEVGKLSDAPVNTL) are Periplasmic-facing. The helical transmembrane segment at 253–281 (WLYLILGIIFGCVGPVFNSLVLRTQDMFQ) threads the bilayer. Residues 282–287 (RFHGGE) lie on the Cytoplasmic side of the membrane. Residues 288–309 (IKKWVLMGGAIGGLCGILGLIE) traverse the membrane as a helical segment. Over 310-329 (PEAAGGGFNLIPIAAAGNFS) the chain is Periplasmic. A run of 2 helical transmembrane segments spans residues 330 to 349 (VGLL…LCFS) and 355 to 376 (GIFA…MAAA). Positions 355–359 (GIFAP) match the Selectivity filter part_3 motif. I356 and F357 together coordinate chloride. Over 377-386 (VLFPQYHLEA) the chain is Periplasmic. The helical intramembrane region spans 387–401 (GTFAIAGMGALMAAS). Residues 402–404 (VRA) constitute an intramembrane region (note=Loop between two helices). The segment at residues 405-416 (PLTGIVLVLEMT) is an intramembrane region (helical). The note=Loop between two helices intramembrane region spans 417-421 (DNYQL). A helical transmembrane segment spans residues 422–438 (ILPMIITCLGATLLAQF). Over 439-473 (LGGKPLYSTILARTLAKQDAEQAAKNQNASAGENT) the chain is Cytoplasmic. A chloride-binding site is contributed by Y445.

Belongs to the chloride channel (TC 2.A.49) family. ClcA subfamily. As to quaternary structure, homodimer.

Its subcellular location is the cell inner membrane. The enzyme catalyses 2 chloride(in) + H(+)(out) = 2 chloride(out) + H(+)(in). In terms of biological role, proton-coupled chloride transporter. Functions as antiport system and exchanges two chloride ions for 1 proton. Probably acts as an electrical shunt for an outwardly-directed proton pump that is linked to amino acid decarboxylation, as part of the extreme acid resistance (XAR) response. The chain is H(+)/Cl(-) exchange transporter ClcA from Salmonella choleraesuis (strain SC-B67).